The sequence spans 379 residues: Dual-specificity RNA methyltransferase RlmN (379 aa).

Glu-90 (proton acceptor) is an active-site residue. The Radical SAM core domain maps to 96 to 348; that stretch reads EPSRGTLCVS…TTVRKTRGDD (253 aa). Cys-103 and Cys-353 are disulfide-bonded. [4Fe-4S] cluster-binding residues include Cys-110, Cys-114, and Cys-117. Residues 179–180, Ser-211, 233–235, and Asn-310 contribute to the S-adenosyl-L-methionine site; these read GE and SLH. Catalysis depends on Cys-353, which acts as the S-methylcysteine intermediate.

This sequence belongs to the radical SAM superfamily. RlmN family. [4Fe-4S] cluster is required as a cofactor.

It localises to the cytoplasm. The catalysed reaction is adenosine(2503) in 23S rRNA + 2 reduced [2Fe-2S]-[ferredoxin] + 2 S-adenosyl-L-methionine = 2-methyladenosine(2503) in 23S rRNA + 5'-deoxyadenosine + L-methionine + 2 oxidized [2Fe-2S]-[ferredoxin] + S-adenosyl-L-homocysteine. The enzyme catalyses adenosine(37) in tRNA + 2 reduced [2Fe-2S]-[ferredoxin] + 2 S-adenosyl-L-methionine = 2-methyladenosine(37) in tRNA + 5'-deoxyadenosine + L-methionine + 2 oxidized [2Fe-2S]-[ferredoxin] + S-adenosyl-L-homocysteine. Its function is as follows. Specifically methylates position 2 of adenine 2503 in 23S rRNA and position 2 of adenine 37 in tRNAs. m2A2503 modification seems to play a crucial role in the proofreading step occurring at the peptidyl transferase center and thus would serve to optimize ribosomal fidelity. This Nitrosomonas europaea (strain ATCC 19718 / CIP 103999 / KCTC 2705 / NBRC 14298) protein is Dual-specificity RNA methyltransferase RlmN.